Consider the following 274-residue polypeptide: Copper chaperone for superoxide dismutase (274 aa).

An HMA domain is found at 11–74 (ACMLEFAVQM…LLEDTGRQAV (64 aa)). Cysteine 22 and cysteine 25 together coordinate Cu cation. Residue lysine 76 forms a Glycyl lysine isopeptide (Lys-Gly) (interchain with G-Cter in ubiquitin) linkage. Positions 88–234 (AAVAILGGSG…LACGIIARSA (147 aa)) are superoxide dismutase-like. The cysteines at positions 141 and 227 are disulfide-linked. The Zn(2+) site is built by histidine 147, histidine 155, histidine 164, and aspartate 167. Residues lysine 189, lysine 216, and lysine 241 each participate in a glycyl lysine isopeptide (Lys-Gly) (interchain with G-Cter in ubiquitin) cross-link. Residues cysteine 244 and cysteine 246 each contribute to the Cu cation site.

In the C-terminal section; belongs to the Cu-Zn superoxide dismutase family. Homodimer, and heterodimer with SOD1. Interacts with COMMD1. Interacts with XIAP/BIRC4. Interacts with SLC31A1(via C-terminal domain); this interaction is Cu(1+)-mediated. The heterodimer CCS:SOD1 interacts with SLC31A1; this heterotrimer is Cu(1+)-mediated and its maintenance is regulated through SOD1 activation. The cofactor is Cu(2+). Zn(2+) is required as a cofactor. In terms of processing, ubiquitinion by XIAP/BIRC4 leads to enhancement of its chaperone activity toward its physiologic target, SOD1, rather than proteasomal degradation. XIAP/BIRC4 preferentially ubiquitinates at Lys-241.

It localises to the cytoplasm. Delivers copper to copper zinc superoxide dismutase (SOD1). The polypeptide is Copper chaperone for superoxide dismutase (Sus scrofa (Pig)).